The following is a 362-amino-acid chain: Cell death regulator Aven (362 aa).

3 disordered regions span residues 1–111 (MQAE…NYSK), 214–237 (VKPKRTDDGKGLGMQLKGPLGPGG), and 253–362 (VLLG…SMIS). Over residues 8–17 (RGGRGRRPGR) the composition is skewed to basic residues. Gly residues predominate over residues 37-47 (RGGGGGGGGDG). Residues 50–60 (RRGRGRGRGFR) show a composition bias toward basic residues. Gly residues predominate over residues 61–72 (GARGGRGGGGAP). The span at 90–105 (VEDDSDAETYGEENDE) shows a compositional bias: acidic residues. Ser-94 carries the post-translational modification Phosphoserine. Lys-230 carries the post-translational modification N6-methyllysine. Over residues 350–362 (EEELEDWLDSMIS) the composition is skewed to acidic residues.

In terms of assembly, binds Apaf-1, BCL-2 and BAD (Bcl-xl). As to expression, highly expressed in testis, ovary, thymus, prostate, spleen, small intestine, colon, heart, skeletal muscle, liver, kidney and pancreas.

The protein resides in the endomembrane system. In terms of biological role, protects against apoptosis mediated by Apaf-1. In Homo sapiens (Human), this protein is Cell death regulator Aven (AVEN).